The sequence spans 138 residues: Large ribosomal subunit protein uL16 (138 aa).

Belongs to the universal ribosomal protein uL16 family. Part of the 50S ribosomal subunit.

Functionally, binds 23S rRNA and is also seen to make contacts with the A and possibly P site tRNAs. The polypeptide is Large ribosomal subunit protein uL16 (Rhodospirillum rubrum (strain ATCC 11170 / ATH 1.1.1 / DSM 467 / LMG 4362 / NCIMB 8255 / S1)).